Here is a 245-residue protein sequence, read N- to C-terminus: MMDPNSTSEDVKFTPDPYQVPFVQAFDQATRVYQDLGGPSQAPLPCVLWPVLPEPLPQGQLTAYHVSAAPTGSWFPAPQPAPENAYQAYAAPQLFPVSDITQNQQTNQAGGEAPQPGDNSTVQPAAAVVFACPGANQGQQLADIGAPQPAPAAAPARRTRKPLQPESLEECDSELDIKRYKNRVASRKCRAKFKHLLQHYREVASAKSSENDRLRLLLKQMCPSLDVDSIIPRTPDVLHEDLLNF.

The interval 1-167 (MMDPNSTSED…RTRKPLQPES (167 aa)) is transactivation. Phosphothreonine is present on residues T14 and T159. The disordered stretch occupies residues 140–167 (QLADIGAPQPAPAAAPARRTRKPLQPES). The Bipartite nuclear localization signal motif lies at 157–194 (RRTRKPLQPESLEECDSELDIKRYKNRVASRKCRAKFK). S167, S173, and S186 each carry phosphoserine. The basic motif stretch occupies residues 178–195 (KRYKNRVASRKCRAKFKH). The 51-residue stretch at 178–228 (KRYKNRVASRKCRAKFKHLLQHYREVASAKSSENDRLRLLLKQMCPSLDVD) folds into the bZIP domain. A leucine-zipper region spans residues 196-228 (LLQHYREVASAKSSENDRLRLLLKQMCPSLDVD). The tract at residues 229 to 245 (SIIPRTPDVLHEDLLNF) is accessory activation domain.

It belongs to the bZIP family. Homodimer. Interacts (via b-ZIP domain) with the DNA polymerase processivity factor BMRF1 (via N-terminus); this interaction may inhibit BZLF1-induced transcription of the BMRF1 promoter. Interacts with human UBN1, CRTC2 and RACK1. Interacts (via N-terminus) with human PAX5 (via N-terminus); this interaction inhibits BZLF1-mediated lytic viral reactivation. Interacts (via leucine-zipper domain) with host CEBPA; this interaction induces G1 host cell cycle arrest. Interacts (via C-terminus) with host TP53BP1 (via C-terminus); this interaction is involved in the activation of the viral lytic cycle. Interacts with host chromatin-remodeling ATPase INO80; this interaction participates to the activation of early lytic viral genes by BZLF1. Interacts with host regulator of chromatin SMARCA5/hSNF2H; this interaction participates to the activation of early lytic viral genes by BZLF1. Interacts with host PLSCR1/Phospholipid scramblase 1; this interaction negatively regulates the transcriptional regulatory activity of BZLF1 by preventing the formation of the BZLF1-CBP complex.

It is found in the host nucleus. Transcription factor that acts as a molecular switch to induce the transition from the latent to the lytic or productive phase of the virus cycle. Mediates the switch from the latent to the lytic cycle of infection in cells containing a highly methylated viral genome. Probably binds to silenced chromatin and recruits host chromatin-remodeling enzymes. Regulates this switch by binding to 2 types of ZEBRA response elements (ZREs): the CpG-free AP-1 like elements (latency) and the methylated CpG-containing elements (lytic replication). Activates preferentially the methylated forms of the viral lytic R (BRLF1) and Na (BRRF1) gene promoters, the latters being the first genes activated during Z-mediated reactivation in latently infected cells. BZLF1 and BRLF1 act together to trigger lytic replication. Also binds the lytic origin of replication, oriLyt. Induces G1 cell cycle arrest by stabilizing the host CCAAT/enhancer binding protein CEBPA. This function is important because the lytic cycle preferentially takes place in host cells arrested in G1. The chain is Lytic switch protein BZLF1 from Epstein-Barr virus (strain AG876) (HHV-4).